Reading from the N-terminus, the 300-residue chain is MTYPGYSFTPKRLDVRPGIAMSYLDEGPSDGEVVVMLHGNPSWGYLWRHLVSGLSDRYRCIVPDHIGMGLSDKPDDAPDAQPRYDYTLQSRVDDLDRLLQHLGITGPITLAVHDWGGMIGFGWALSHHAQVKRLVITNTAAFPLPPEKPMPWQIAMGRHWRLGEWFIRTFNAFSSGASWLGVSRRMPAAVRRAYVAPYDNWKNRISTIRFMQDIPLSPADQAWSLLERSAQALPSFADRPAFIAWGLRDICFDKHFLAGFRRALPQAEVMAFDDANHYVLEDKHEVLVPAIRAFLERNPL.

The AB hydrolase-1 domain occupies 33-282 (VVVMLHGNPS…DDANHYVLED (250 aa)).

It belongs to the AB hydrolase superfamily. As to quaternary structure, homotetramer. Forms a complex with OleC and OleD.

The protein resides in the cytoplasm. It catalyses the reaction a cis-3-alkyl-4-alkyloxetan-2-one = a cis-alkene + CO2. In terms of biological role, involved in olefin biosynthesis. Catalyzes the elimination of carbon dioxide from beta-lactones to form the final olefin product. This Xanthomonas campestris pv. campestris (strain ATCC 33913 / DSM 3586 / NCPPB 528 / LMG 568 / P 25) protein is Cis-3-alkyl-4-alkyloxetan-2-one decarboxylase.